The following is a 172-amino-acid chain: MLDAFAKVVAQADARGEFLSNTQLDALSSMVAEGNKRLDVVNKINSNASAIVTNSARALFAEQPQLIQPGGNAYTSRRMAACLRDMEIVLRYVSYAMIAGDSSVLDDRCLNGLRETYQALGTPGSSVSVAVQKMKEASVALANDLTGTPQGDCSALVAELASYFDRAAVSVV.

Asn72 bears the N4-methylasparagine mark. Residues Cys82 and Cys153 each coordinate (2R,3E)-phycocyanobilin.

The protein belongs to the phycobiliprotein family. Heterodimer of an alpha and a beta subunit, which further assembles into trimers and the trimers into hexamers. The basic functional unit of phycobiliproteins is a ring-shaped hexamer formed from two back-to-back trimers contacting via the alpha chain subunits. The trimers are composed of alpha/beta subunit heterodimers arranged around a three-fold axis of symmetry. The phycoerythrins also contain a gamma subunit which is located in the center of the hexamer. Post-translationally, contains two covalently linked bilin chromophores.

It is found in the plastid. The protein resides in the chloroplast thylakoid membrane. Its function is as follows. Light-harvesting photosynthetic bile pigment-protein from the phycobiliprotein complex (phycobilisome, PBS). Phycocyanin is the major phycobiliprotein in the PBS rod. The sequence is that of C-phycocyanin beta chain (cpcB) from Pyropia haitanensis (Red seaweed).